The primary structure comprises 242 residues: Ribosomal RNA small subunit methyltransferase G (242 aa).

S-adenosyl-L-methionine-binding positions include G78, F83, 129–130 (AE), and R148.

This sequence belongs to the methyltransferase superfamily. RNA methyltransferase RsmG family.

The protein localises to the cytoplasm. Its function is as follows. Specifically methylates the N7 position of a guanine in 16S rRNA. This Lachnoclostridium phytofermentans (strain ATCC 700394 / DSM 18823 / ISDg) (Clostridium phytofermentans) protein is Ribosomal RNA small subunit methyltransferase G.